The following is a 45-amino-acid chain: MSKRTFQPNNRKRAKTHGFRLRMRTRAGRAILSARRAKGRQKLSA.

It belongs to the bacterial ribosomal protein bL34 family.

The sequence is that of Large ribosomal subunit protein bL34 from Leifsonia xyli subsp. xyli (strain CTCB07).